A 42-amino-acid polypeptide reads, in one-letter code: uncharacterized protein (42 aa).

The protein resides in the cytoplasm. This is an uncharacterized protein from Escherichia coli (strain K12).